The following is a 61-amino-acid chain: Small ribosomal subunit protein uS14 (61 aa).

The Zn(2+) site is built by C24, C27, C40, and C43.

It belongs to the universal ribosomal protein uS14 family. Zinc-binding uS14 subfamily. In terms of assembly, part of the 30S ribosomal subunit. Contacts proteins S3 and S10. Zn(2+) serves as cofactor.

In terms of biological role, binds 16S rRNA, required for the assembly of 30S particles and may also be responsible for determining the conformation of the 16S rRNA at the A site. In Desulfotalea psychrophila (strain LSv54 / DSM 12343), this protein is Small ribosomal subunit protein uS14.